The chain runs to 102 residues: Citrate lyase acyl carrier protein (102 aa).

S14 is subject to O-(phosphoribosyl dephospho-coenzyme A)serine.

This sequence belongs to the CitD family. As to quaternary structure, oligomer with a subunit composition of (alpha,beta,gamma)6.

The protein resides in the cytoplasm. Covalent carrier of the coenzyme of citrate lyase. In Streptococcus equi subsp. zooepidemicus (strain MGCS10565), this protein is Citrate lyase acyl carrier protein.